Consider the following 191-residue polypeptide: Probable GTP-binding protein EngB (191 aa).

The EngB-type G domain maps to 13–189; sequence DRLEVAFAGR…RAEIVALLPD (177 aa). Residues 21–28, 48–52, 67–70, 134–137, and 168–170 contribute to the GTP site; these read GRSNVGKS, GRTRE, DLPG, TKTD, and TSS. Positions 28 and 50 each coordinate Mg(2+).

Belongs to the TRAFAC class TrmE-Era-EngA-EngB-Septin-like GTPase superfamily. EngB GTPase family. It depends on Mg(2+) as a cofactor.

Its function is as follows. Necessary for normal cell division and for the maintenance of normal septation. This Maricaulis maris (strain MCS10) (Caulobacter maris) protein is Probable GTP-binding protein EngB.